The following is a 286-amino-acid chain: MWGEKMDPLSGFISSLIWWLLFFYLIMAPQIQYKQLQLARLKILRELSNKRNSTVITMIHRQESIGLFGIPVYKFITIEDSEEILRAIRAAPKDKPIDLIIHTPGGLVLAATQIAKALKAHPAETRVIVPHYAMSGGTLIALAADKIIMDENAVLGPVDPQLGQYPAPSIVKAVEQKGADKADDQTLILADIAKKAINQVQNFVYNLLKDKYGEEKAKELSKILTEGRWTHDYPITVEEAKELGLDVDTNVPEEVYTLMELYKQPVRQRGTVEFMPYPVKQENGAK.

The helical transmembrane segment at 8–28 (PLSGFISSLIWWLLFFYLIMA) threads the bilayer.

To M.jannaschii MJ1495.

The protein localises to the membrane. This is an uncharacterized protein from Methanocaldococcus jannaschii (strain ATCC 43067 / DSM 2661 / JAL-1 / JCM 10045 / NBRC 100440) (Methanococcus jannaschii).